We begin with the raw amino-acid sequence, 125 residues long: MIYGIGTDIVSLKRIIRLNKKFGQAFAGRILTPEELLEFPQAGKPVNYLAKRFAAKEAFAKAVGTGIRGAVSFCNIGIGHDALGKPEFFYGPALSEWLEEQGISRVSLSMADEGDTVLAFAVAEK.

Residues Asp-8 and Glu-57 each coordinate Mg(2+).

The protein belongs to the P-Pant transferase superfamily. AcpS family. It depends on Mg(2+) as a cofactor.

It localises to the cytoplasm. It catalyses the reaction apo-[ACP] + CoA = holo-[ACP] + adenosine 3',5'-bisphosphate + H(+). Transfers the 4'-phosphopantetheine moiety from coenzyme A to a Ser of acyl-carrier-protein. This Neisseria gonorrhoeae (strain ATCC 700825 / FA 1090) protein is Holo-[acyl-carrier-protein] synthase.